A 150-amino-acid chain; its full sequence is Arginine repressor (150 aa).

It belongs to the ArgR family.

The protein resides in the cytoplasm. The protein operates within amino-acid biosynthesis; L-arginine biosynthesis [regulation]. Its function is as follows. Regulates arginine biosynthesis genes. This is Arginine repressor from Finegoldia magna (strain ATCC 29328 / DSM 20472 / WAL 2508) (Peptostreptococcus magnus).